Consider the following 410-residue polypeptide: Gamma-glutamyl phosphate reductase (410 aa).

The protein belongs to the gamma-glutamyl phosphate reductase family.

The protein localises to the cytoplasm. It carries out the reaction L-glutamate 5-semialdehyde + phosphate + NADP(+) = L-glutamyl 5-phosphate + NADPH + H(+). The protein operates within amino-acid biosynthesis; L-proline biosynthesis; L-glutamate 5-semialdehyde from L-glutamate: step 2/2. In terms of biological role, catalyzes the NADPH-dependent reduction of L-glutamate 5-phosphate into L-glutamate 5-semialdehyde and phosphate. The product spontaneously undergoes cyclization to form 1-pyrroline-5-carboxylate. In Campylobacter jejuni subsp. jejuni serotype O:2 (strain ATCC 700819 / NCTC 11168), this protein is Gamma-glutamyl phosphate reductase.